We begin with the raw amino-acid sequence, 176 residues long: Ribosome maturation factor RimM (176 aa).

The 76-residue stretch at 99 to 174 folds into the PRC barrel domain; it reads KDEFYVRDLI…IVLIQPELWN (76 aa).

Belongs to the RimM family. In terms of assembly, binds ribosomal protein uS19.

The protein resides in the cytoplasm. Functionally, an accessory protein needed during the final step in the assembly of 30S ribosomal subunit, possibly for assembly of the head region. Essential for efficient processing of 16S rRNA. May be needed both before and after RbfA during the maturation of 16S rRNA. It has affinity for free ribosomal 30S subunits but not for 70S ribosomes. The sequence is that of Ribosome maturation factor RimM from Leptospira borgpetersenii serovar Hardjo-bovis (strain JB197).